Here is a 430-residue protein sequence, read N- to C-terminus: Tol-Pal system protein TolB (430 aa).

A signal peptide spans 1–21 (MKQAFRVALGFLVLWASVLHA).

It belongs to the TolB family. The Tol-Pal system is composed of five core proteins: the inner membrane proteins TolA, TolQ and TolR, the periplasmic protein TolB and the outer membrane protein Pal. They form a network linking the inner and outer membranes and the peptidoglycan layer.

It localises to the periplasm. Functionally, part of the Tol-Pal system, which plays a role in outer membrane invagination during cell division and is important for maintaining outer membrane integrity. TolB occupies a key intermediary position in the Tol-Pal system because it communicates directly with both membrane-embedded components, Pal in the outer membrane and TolA in the inner membrane. This chain is Tol-Pal system protein TolB, found in Yersinia enterocolitica serotype O:8 / biotype 1B (strain NCTC 13174 / 8081).